We begin with the raw amino-acid sequence, 350 residues long: Putative isomerase YbhH (350 aa).

This sequence belongs to the PrpF family.

This Escherichia coli O6:H1 (strain CFT073 / ATCC 700928 / UPEC) protein is Putative isomerase YbhH (ybhH).